A 1002-amino-acid chain; its full sequence is TOG array regulator of axonemal microtubules protein 2 (1002 aa).

5 disordered regions span residues 54-74, 131-214, 332-351, 402-421, and 426-450; these read SSVL…EDQS, KRRL…SAQE, ETRS…KVQV, PLRG…PRRN, and LQRK…GFAR.

This sequence belongs to the Crescerin family.

The protein is TOG array regulator of axonemal microtubules protein 2 (Togaram2) of Mus musculus (Mouse).